A 191-amino-acid chain; its full sequence is Potassium-transporting ATPase KdpC subunit (191 aa).

The helical transmembrane segment at 7 to 27 threads the bilayer; it reads ASLVLFLSLTLLTGVAYPLLV.

It belongs to the KdpC family. In terms of assembly, the system is composed of three essential subunits: KdpA, KdpB and KdpC.

The protein resides in the cell inner membrane. Its function is as follows. Part of the high-affinity ATP-driven potassium transport (or Kdp) system, which catalyzes the hydrolysis of ATP coupled with the electrogenic transport of potassium into the cytoplasm. This subunit acts as a catalytic chaperone that increases the ATP-binding affinity of the ATP-hydrolyzing subunit KdpB by the formation of a transient KdpB/KdpC/ATP ternary complex. The polypeptide is Potassium-transporting ATPase KdpC subunit (Methylibium petroleiphilum (strain ATCC BAA-1232 / LMG 22953 / PM1)).